Reading from the N-terminus, the 294-residue chain is Acetyl-coenzyme A carboxylase carboxyl transferase subunit beta (294 aa).

Residues leucine 29–alanine 294 enclose the CoA carboxyltransferase N-terminal domain. Residues cysteine 33, cysteine 36, cysteine 52, and cysteine 55 each coordinate Zn(2+). The segment at cysteine 33–cysteine 55 adopts a C4-type zinc-finger fold.

This sequence belongs to the AccD/PCCB family. Acetyl-CoA carboxylase is a heterohexamer composed of biotin carboxyl carrier protein (AccB), biotin carboxylase (AccC) and two subunits each of ACCase subunit alpha (AccA) and ACCase subunit beta (AccD). Zn(2+) is required as a cofactor.

The protein resides in the cytoplasm. It catalyses the reaction N(6)-carboxybiotinyl-L-lysyl-[protein] + acetyl-CoA = N(6)-biotinyl-L-lysyl-[protein] + malonyl-CoA. Its pathway is lipid metabolism; malonyl-CoA biosynthesis; malonyl-CoA from acetyl-CoA: step 1/1. In terms of biological role, component of the acetyl coenzyme A carboxylase (ACC) complex. Biotin carboxylase (BC) catalyzes the carboxylation of biotin on its carrier protein (BCCP) and then the CO(2) group is transferred by the transcarboxylase to acetyl-CoA to form malonyl-CoA. The polypeptide is Acetyl-coenzyme A carboxylase carboxyl transferase subunit beta (Prochlorococcus marinus (strain NATL2A)).